The following is a 445-amino-acid chain: GTPase Der (445 aa).

EngA-type G domains lie at 3 to 167 (PVIA…NLPD) and 180 to 353 (IKLA…ASAN). GTP contacts are provided by residues 9-16 (GRPNVGKS), 56-60 (DTGGF), 119-122 (NKAE), 186-193 (GRPNVGKS), 233-237 (DTAGL), and 298-301 (NKWD). A KH-like domain is found at 354–438 (RKMSTPVLTR…PLRIQLKSSV (85 aa)).

It belongs to the TRAFAC class TrmE-Era-EngA-EngB-Septin-like GTPase superfamily. EngA (Der) GTPase family. Associates with the 50S ribosomal subunit.

GTPase that plays an essential role in the late steps of ribosome biogenesis. The chain is GTPase Der from Polaromonas naphthalenivorans (strain CJ2).